The primary structure comprises 485 residues: NADH-quinone oxidoreductase subunit N (485 aa).

14 helical membrane passes run 8 to 28 (LIAL…MLCI), 35 to 55 (FVNA…LYFV), 75 to 95 (FYTG…YPWL), 105 to 125 (FYLL…ANHL), 127 to 147 (SLFI…GYAF), 159 to 179 (YMLL…LIYA), 203 to 223 (LLAG…LVPF), 235 to 255 (PAPV…GAVM), 271 to 291 (IVLG…AVSQ), 297 to 317 (LLGY…IAVQ), 326 to 346 (VGVY…VVSL), 374 to 394 (AVMT…GFFG), 407 to 426 (LWWL…YYYL), and 449 to 469 (ALTA…FFGL).

Belongs to the complex I subunit 2 family. NDH-1 is composed of 13 different subunits. Subunits NuoA, H, J, K, L, M, N constitute the membrane sector of the complex.

Its subcellular location is the cell inner membrane. It catalyses the reaction a quinone + NADH + 5 H(+)(in) = a quinol + NAD(+) + 4 H(+)(out). In terms of biological role, NDH-1 shuttles electrons from NADH, via FMN and iron-sulfur (Fe-S) centers, to quinones in the respiratory chain. The immediate electron acceptor for the enzyme in this species is believed to be ubiquinone. Couples the redox reaction to proton translocation (for every two electrons transferred, four hydrogen ions are translocated across the cytoplasmic membrane), and thus conserves the redox energy in a proton gradient. In Pectobacterium carotovorum subsp. carotovorum (strain PC1), this protein is NADH-quinone oxidoreductase subunit N.